The primary structure comprises 696 residues: Probable glutamine--fructose-6-phosphate aminotransferase [isomerizing] (696 aa).

Residue Cys2 is the For GATase activity of the active site. A Glutamine amidotransferase type-2 domain is found at Cys2–Gly303. SIS domains follow at residues Tyr375–Ser514 and Ala547–Pro686.

It carries out the reaction D-fructose 6-phosphate + L-glutamine = D-glucosamine 6-phosphate + L-glutamate. It participates in nucleotide-sugar biosynthesis; UDP-N-acetyl-alpha-D-glucosamine biosynthesis; alpha-D-glucosamine 6-phosphate from D-fructose 6-phosphate: step 1/1. Involved in amino sugar synthesis (formation of chitin, supplies the amino sugars of asparagine-linked oligosaccharides of glycoproteins). The polypeptide is Probable glutamine--fructose-6-phosphate aminotransferase [isomerizing] (Schizosaccharomyces pombe (strain 972 / ATCC 24843) (Fission yeast)).